The following is a 191-amino-acid chain: Outer membrane lipoprotein DolP (191 aa).

An N-terminal signal peptide occupies residues 1–18 (MKALSPIAVLISALLLQG). C19 is lipidated: N-palmitoyl cysteine. C19 is lipidated: S-diacylglycerol cysteine. 2 BON domains span residues 46 to 115 (DDGT…RQGQ) and 124 to 191 (NDTW…TFIK).

This sequence belongs to the lipoprotein DolP family.

The protein localises to the cell outer membrane. Its function is as follows. Plays an important role in maintaining outer membrane integrity. The chain is Outer membrane lipoprotein DolP from Escherichia coli O157:H7.